The primary structure comprises 276 residues: Secreted RxLR effector protein 85 (276 aa).

The signal sequence occupies residues 1–27; the sequence is MRYCAFRLGLFFIGYSCCVLLSTPTLA. A RxLR motif is present at residues 110–113; the sequence is RQLR.

Belongs to the RxLR effector family.

It localises to the secreted. It is found in the host cell membrane. In terms of biological role, secreted effector that partially suppresses the host cell death induced by cell death-inducing proteins. The chain is Secreted RxLR effector protein 85 from Plasmopara viticola (Downy mildew of grapevine).